The chain runs to 96 residues: Small ribosomal subunit protein bS6 (96 aa).

Belongs to the bacterial ribosomal protein bS6 family.

Binds together with bS18 to 16S ribosomal RNA. This is Small ribosomal subunit protein bS6 from Streptomyces griseus subsp. griseus (strain JCM 4626 / CBS 651.72 / NBRC 13350 / KCC S-0626 / ISP 5235).